Reading from the N-terminus, the 95-residue chain is Ascorbate-specific PTS system EIIB component (95 aa).

The region spanning Met1–Leu95 is the PTS EIIB type-2 domain. The Phosphocysteine intermediate role is filled by Cys12. Residue Cys12 is modified to Phosphocysteine.

The protein resides in the cytoplasm. The catalysed reaction is N(pros)-phospho-L-histidyl-[protein] + L-ascorbate(out) = L-ascorbate 6-phosphate(in) + L-histidyl-[protein]. Functionally, the phosphoenolpyruvate-dependent sugar phosphotransferase system (sugar PTS), a major carbohydrate active transport system, catalyzes the phosphorylation of incoming sugar substrates concomitantly with their translocation across the cell membrane. The enzyme II UlaABC PTS system is involved in ascorbate transport. The polypeptide is Ascorbate-specific PTS system EIIB component (ulaB) (Mycoplasma pneumoniae (strain ATCC 29342 / M129 / Subtype 1) (Mycoplasmoides pneumoniae)).